The sequence spans 240 residues: Expansin-A20 (240 aa).

The first 21 residues, 1–21 (MGNILLQLLAVVALCIAPARS), serve as a signal peptide directing secretion. The Expansin-like EG45 domain occupies 41 to 145 (GGACGYGNLY…QQVKCWRYGG (105 aa)). N107 and N207 each carry an N-linked (GlcNAc...) asparagine glycan. Residues 155–234 (YFELVLVTNM…GWSFGQTFST (80 aa)) form the Expansin-like CBD domain.

The protein belongs to the expansin family. Expansin A subfamily.

It localises to the secreted. The protein localises to the cell wall. It is found in the membrane. Its function is as follows. May cause loosening and extension of plant cell walls by disrupting non-covalent bonding between cellulose microfibrils and matrix glucans. No enzymatic activity has been found. May be required for rapid internodal elongation in deepwater rice during submergence. This Oryza sativa subsp. japonica (Rice) protein is Expansin-A20 (EXPA20).